Reading from the N-terminus, the 189-residue chain is Threonylcarbamoyl-AMP synthase (189 aa).

Residues 6–189 (TAIFTPIIDA…VLTGEQIRQG (184 aa)) enclose the YrdC-like domain.

Belongs to the SUA5 family. TsaC subfamily.

The protein localises to the cytoplasm. The enzyme catalyses L-threonine + hydrogencarbonate + ATP = L-threonylcarbamoyladenylate + diphosphate + H2O. Its function is as follows. Required for the formation of a threonylcarbamoyl group on adenosine at position 37 (t(6)A37) in tRNAs that read codons beginning with adenine. Catalyzes the conversion of L-threonine, HCO(3)(-)/CO(2) and ATP to give threonylcarbamoyl-AMP (TC-AMP) as the acyladenylate intermediate, with the release of diphosphate. This Serratia proteamaculans (strain 568) protein is Threonylcarbamoyl-AMP synthase.